The chain runs to 251 residues: Membrane-anchored junction protein (251 aa).

The Nuclear segment spans residues 1 to 227; it reads MSLKPFTYPF…HSNPPPLKEP (227 aa). The tract at residues 140–225 is disordered; that stretch reads RKRKLMEEPS…LEHSNPPPLK (86 aa). Residues 183 to 198 show a composition bias toward polar residues; it reads EDSQQDTPASDSTAVT. The chain crosses the membrane as a helical span at residues 228 to 246; that stretch reads AARGFLGFLSALFPFRYFF. The Perinuclear space portion of the chain corresponds to 247–251; the sequence is RKSTQ.

Belongs to the MAJIN family. As to quaternary structure, component of the MAJIN-TERB1-TERB2 complex, composed of MAJIN, TERB1 and TERB2.

It localises to the nucleus inner membrane. Its subcellular location is the chromosome. The protein resides in the telomere. Its function is as follows. Meiosis-specific telomere-associated protein involved in meiotic telomere attachment to the nucleus inner membrane, a crucial step for homologous pairing and synapsis. Component of the MAJIN-TERB1-TERB2 complex, which promotes telomere cap exchange by mediating attachment of telomeric DNA to the inner nuclear membrane and replacement of the protective cap of telomeric chromosomes: in early meiosis, the MAJIN-TERB1-TERB2 complex associates with telomeric DNA and the shelterin/telosome complex. During prophase, the complex matures and promotes release of the shelterin/telosome complex from telomeric DNA. In the complex, MAJIN acts as the anchoring subunit to the nucleus inner membrane. MAJIN shows DNA-binding activity, possibly for the stabilization of telomere attachment on the nucleus inner membrane. This Rattus norvegicus (Rat) protein is Membrane-anchored junction protein.